The following is a 236-amino-acid chain: Penton protein H240R (236 aa).

The protein belongs to the asfivirus H240R family.

Its subcellular location is the virion. Functionally, forms the penton at the fivefold vertices of the icosahedral capsid. Together with the minor capsid proteins (p17, p49, and M1249L), forms a complicated network immediately below the outer capsid shell, stabilizing the whole capsid. This African swine fever virus (isolate Pig/Kenya/KEN-50/1950) (ASFV) protein is Penton protein H240R.